The chain runs to 279 residues: Phosphatidylglycerol--prolipoprotein diacylglyceryl transferase (279 aa).

The next 4 membrane-spanning stretches (helical) occupy residues 4–24 (IGPLAIRWYGVLLTLAIFLGY), 44–64 (VVFWAVVFGVVGARLGYVLTS), 76–96 (LYIWHGGLSFHGAILGGGLTF), and 104–124 (GYPLWPYLDAATPGVALGIVA). Position 126 (R126) interacts with a 1,2-diacyl-sn-glycero-3-phospho-(1'-sn-glycerol). Helical transmembrane passes span 182 to 202 (LTQVYGAVVGLILLFLSLYWL), 206 to 226 (PFYGYAFWQFVLWYSVLRSVL), and 245 to 265 (LGIGLFTATQVVSLPLVLLSL).

The protein belongs to the Lgt family.

The protein resides in the cell inner membrane. The enzyme catalyses L-cysteinyl-[prolipoprotein] + a 1,2-diacyl-sn-glycero-3-phospho-(1'-sn-glycerol) = an S-1,2-diacyl-sn-glyceryl-L-cysteinyl-[prolipoprotein] + sn-glycerol 1-phosphate + H(+). It participates in protein modification; lipoprotein biosynthesis (diacylglyceryl transfer). Functionally, catalyzes the transfer of the diacylglyceryl group from phosphatidylglycerol to the sulfhydryl group of the N-terminal cysteine of a prolipoprotein, the first step in the formation of mature lipoproteins. The sequence is that of Phosphatidylglycerol--prolipoprotein diacylglyceryl transferase from Thermus thermophilus (strain ATCC 27634 / DSM 579 / HB8).